The following is a 514-amino-acid chain: Glutamyl-tRNA(Gln) amidotransferase subunit B, mitochondrial (514 aa).

This sequence belongs to the GatB/GatE family. GatB subfamily. As to quaternary structure, subunit of the heterotrimeric GatCAB amidotransferase (AdT) complex, composed of A, B and C subunits.

The protein localises to the mitochondrion. The enzyme catalyses L-glutamyl-tRNA(Gln) + L-glutamine + ATP + H2O = L-glutaminyl-tRNA(Gln) + L-glutamate + ADP + phosphate + H(+). Allows the formation of correctly charged Gln-tRNA(Gln) through the transamidation of misacylated Glu-tRNA(Gln) in the mitochondria. The reaction takes place in the presence of glutamine and ATP through an activated gamma-phospho-Glu-tRNA(Gln). This Naegleria gruberi (Amoeba) protein is Glutamyl-tRNA(Gln) amidotransferase subunit B, mitochondrial.